A 506-amino-acid polypeptide reads, in one-letter code: Cationic amino acid transporter 8 (506 aa).

Asn-2 and Asn-5 each carry an N-linked (GlcNAc...) asparagine glycan. A helical transmembrane segment spans residues 38–58 (FYLLLIIIIYTATSACIYFDW). A glycan (N-linked (GlcNAc...) asparagine) is linked at Asn-75. Transmembrane regions (helical) follow at residues 93–113 (NLYP…GFLY), 116–136 (IGPK…WIFL), 147–167 (LIGF…ILTV), 174–194 (ISTF…AVPA), and 211–231 (ICYG…TFLL). Asn-277 carries N-linked (GlcNAc...) asparagine glycosylation. The helical transmembrane segment at 302-322 (ILLFFKVLLSYPSICIIVYFI) threads the bilayer. N-linked (GlcNAc...) asparagine glycosylation is found at Asn-325 and Asn-342. 4 helical membrane passes run 344–364 (SIIN…IIFG), 372–392 (AAII…TALI), 399–419 (LISA…IYCF), and 427–447 (VVFG…SLFC). N-linked (GlcNAc...) asparagine glycans are attached at residues Asn-453 and Asn-456. A helical transmembrane segment spans residues 466-486 (TISILLAISFIIMFLPLSILY).

It belongs to the SLC43A transporter (TC 2.A.1.44) family.

The protein localises to the cell membrane. Functionally, cationic amino acid transporter which transports L-arginine, L-lysine and, to a lesser extent, L-histidine and ornithine. Plays an essential role in gametogenesis. The chain is Cationic amino acid transporter 8 from Plasmodium berghei (strain Anka).